The sequence spans 382 residues: Acetylserotonin O-methyltransferase (382 aa).

S-adenosyl-L-homocysteine is bound by residues Gly-218, Asp-241, Asp-261, Met-262, and Lys-275. The active-site Proton acceptor is His-279. Active-site residues include Glu-308 and Glu-347.

The protein belongs to the class I-like SAM-binding methyltransferase superfamily. Cation-independent O-methyltransferase family.

The protein localises to the cytoplasm. It catalyses the reaction N-acetylserotonin + S-adenosyl-L-methionine = melatonin + S-adenosyl-L-homocysteine + H(+). Its pathway is aromatic compound metabolism; melatonin biosynthesis; melatonin from serotonin: step 1/2. Functionally, methyltransferase which catalyzes the transfer of a methyl group onto N-acetylserotonin, producing melatonin (N-acetyl-5-methoxytryptamine). Does not seem to possess caffeate O-methyltransferase activity. Implicated in melatonin-dependent circadian dynamics of stomatal aperture to minimize night water loss and promote drought tolerance. Prevents seed germination by promoting melatonin biosynthesis. Promotes melatonin-triggered defense responses to the necrotrophic fungus Botrytis cinerea. Its function is as follows. (Microbial infection) Promotes melatonin-triggered defense responses to the necrotrophic fungus Botrytis cinerea. The sequence is that of Acetylserotonin O-methyltransferase from Arabidopsis thaliana (Mouse-ear cress).